A 65-amino-acid chain; its full sequence is Large ribosomal subunit protein bL35 (65 aa).

This sequence belongs to the bacterial ribosomal protein bL35 family.

In Proteus mirabilis (strain HI4320), this protein is Large ribosomal subunit protein bL35.